A 191-amino-acid polypeptide reads, in one-letter code: Peptidyl-tRNA hydrolase (191 aa).

A tRNA-binding site is contributed by Y16. The active-site Proton acceptor is the H21. Residues F66, N68, and N114 each contribute to the tRNA site.

This sequence belongs to the PTH family. As to quaternary structure, monomer.

It localises to the cytoplasm. It carries out the reaction an N-acyl-L-alpha-aminoacyl-tRNA + H2O = an N-acyl-L-amino acid + a tRNA + H(+). Hydrolyzes ribosome-free peptidyl-tRNAs (with 1 or more amino acids incorporated), which drop off the ribosome during protein synthesis, or as a result of ribosome stalling. Functionally, catalyzes the release of premature peptidyl moieties from peptidyl-tRNA molecules trapped in stalled 50S ribosomal subunits, and thus maintains levels of free tRNAs and 50S ribosomes. The polypeptide is Peptidyl-tRNA hydrolase (Geotalea daltonii (strain DSM 22248 / JCM 15807 / FRC-32) (Geobacter daltonii)).